Reading from the N-terminus, the 1912-residue chain is Methylcytosine dioxygenase TET2 (1912 aa).

Over residues 1–11 (MEQDRTTHAEG) the composition is skewed to basic and acidic residues. A disordered region spans residues 1 to 86 (MEQDRTTHAE…PHEDRGYSRC (86 aa)). 2 positions are modified to phosphoserine: serine 15 and serine 23. Residues 53–74 (TKWQSSQSCYGISHMKGSQSSH) are compositionally biased toward polar residues. Residues serine 76 and serine 97 each carry the phosphoserine modification. Disordered stretches follow at residues 112–166 (LDQK…FPTR), 340–359 (DRNL…QKET), 367–388 (SSKF…QSLL), 429–470 (IDHQ…PEKS), 673–723 (PQTQ…DKQR), 832–862 (EQAQ…AEAA), 907–966 (QEQQ…NGQP), and 1009–1052 (ESEN…EGCN). Polar residues-rich tracts occupy residues 135–158 (SRQP…QESS), 340–353 (DRNL…SEQY), 367–387 (SSKF…SQSL), 434–447 (KTSS…SVHT), and 673–689 (PQTQ…SNFP). Positions 690 to 701 (QICQQQQQQQLQ) are enriched in low complexity. Polar residues-rich tracts occupy residues 707–719 (QMPQ…QGSN) and 832–844 (EQAQ…SSLQ). The segment covering 907 to 921 (QEQQQTQQSQPGHNQ) has biased composition (low complexity). Composition is skewed to polar residues over residues 944–966 (PQEN…NGQP) and 1036–1046 (SDTPGEQSQNG). Residue serine 1036 is modified to Phosphoserine. The Zn(2+) site is built by cysteine 1048, cysteine 1106, histidine 1132, and cysteine 1134. Arginine 1174 serves as a coordination point for 2-oxoglutarate. Residues cysteine 1184, cysteine 1186, cysteine 1202, and cysteine 1211 each contribute to the Zn(2+) site. The interval 1203-1216 (SWSMYYNGCKFARS) is interaction with DNA. Lysine 1212 participates in a covalent cross-link: Glycyl lysine isopeptide (Lys-Gly) (interchain with G-Cter in ubiquitin). Residue cysteine 1271 coordinates Zn(2+). A 2-oxoglutarate-binding site is contributed by cysteine 1287. Residue histidine 1293 coordinates Zn(2+). Fe cation-binding residues include histidine 1295 and aspartate 1297. A substrate-binding site is contributed by asparagine 1300. Residue histidine 1329 coordinates 2-oxoglutarate. 2 disordered regions span residues 1379–1414 (KKKA…SSSH) and 1444–1514 (LQRH…HTSD). Over residues 1387-1396 (AKTKKAARKR) the composition is skewed to basic residues. Residues 1456–1473 (QPQPPQPQPQTTPQPQPQ) show a composition bias toward pro residues. Over residues 1480–1512 (GNSQSVGSHCSGSTSVYTRQPTPHSPYPSSAHT) the composition is skewed to polar residues. Fe cation is bound at residue histidine 1795. Residue 1810–1812 (RIS) coordinates 2-oxoglutarate. 1816-1818 (YRH) serves as a coordination point for substrate. Histidine 1826 contacts Zn(2+). The span at 1842–1866 (EEECGKNGSDHVSQKNHGKQEKREP) shows a compositional bias: basic and acidic residues. The tract at residues 1842–1871 (EEECGKNGSDHVSQKNHGKQEKREPTGPQE) is disordered.

It belongs to the TET family. Interacts with HCFC1. Interacts with OGT. Interacts with PROSER1; this interaction mediates TET2 O-GlcNAcylation and stability by promoting the interaction between OGT and TET2. Directly interacts (via C-terminus) with the DCAF1 component of the CRL4(VprBP) E3 ubiquitin-protein ligase complex. Fe(2+) serves as cofactor. Zn(2+) is required as a cofactor. In terms of processing, may be glycosylated. It is unclear whether interaction with OGT leads to GlcNAcylation. According to a report, it is GlcNAcylated by OGT. In contrast, another group reports no GlcNAcylation by OGT in human ortholog. Monoubiquitinated at Lys-1212 by the DCX (DDB1-CUL4-X-box) E3 ubiquitin-protein ligase complex called CRL4(VprBP) or CUL4A-RBX1-DDB1-DCAF1/VPRBP complex; this modification promotes binding to DNA. Post-translationally, acetylated. In terms of tissue distribution, expressed in the brain, kidney, heart, lung, muscle and stomach. Expressed in germinal vesicle (GV) stage and MII-stage oocytes and in early embryos. Present in embryonic stem cells (ES cells).

The protein localises to the nucleus. It localises to the chromosome. The catalysed reaction is a 5-methyl-2'-deoxycytidine in DNA + 2-oxoglutarate + O2 = a 5-hydroxymethyl-2'-deoxycytidine in DNA + succinate + CO2. The enzyme catalyses a 5-hydroxymethyl-2'-deoxycytidine in DNA + 2-oxoglutarate + O2 = a 5-formyl-2'-deoxycytidine in DNA + succinate + CO2 + H2O. It catalyses the reaction a 5-formyl-2'-deoxycytidine in DNA + 2-oxoglutarate + O2 = a 5-carboxyl-2'-deoxycytidine in DNA + succinate + CO2 + H(+). Functionally, dioxygenase that catalyzes the conversion of the modified genomic base 5-methylcytosine (5mC) into 5-hydroxymethylcytosine (5hmC) and plays a key role in active DNA demethylation. Has a preference for 5-hydroxymethylcytosine in CpG motifs. Also mediates subsequent conversion of 5hmC into 5-formylcytosine (5fC), and conversion of 5fC to 5-carboxylcytosine (5caC). Conversion of 5mC into 5hmC, 5fC and 5caC probably constitutes the first step in cytosine demethylation. Methylation at the C5 position of cytosine bases is an epigenetic modification of the mammalian genome which plays an important role in transcriptional regulation. In addition to its role in DNA demethylation, also involved in the recruitment of the O-GlcNAc transferase OGT to CpG-rich transcription start sites of active genes, thereby promoting histone H2B GlcNAcylation by OGT. The sequence is that of Methylcytosine dioxygenase TET2 (Tet2) from Mus musculus (Mouse).